A 212-amino-acid chain; its full sequence is Ribosomal RNA small subunit methyltransferase G (212 aa).

S-adenosyl-L-methionine is bound by residues Gly-80, Leu-85, 131–132 (AE), and Arg-146.

This sequence belongs to the methyltransferase superfamily. RNA methyltransferase RsmG family.

The protein resides in the cytoplasm. The catalysed reaction is guanosine(527) in 16S rRNA + S-adenosyl-L-methionine = N(7)-methylguanosine(527) in 16S rRNA + S-adenosyl-L-homocysteine. Its function is as follows. Specifically methylates the N7 position of guanine in position 527 of 16S rRNA. In Xanthomonas campestris pv. campestris (strain 8004), this protein is Ribosomal RNA small subunit methyltransferase G.